The primary structure comprises 756 residues: Probable cleavage and polyadenylation specificity factor subunit 2 (756 aa).

A phosphothreonine mark is found at Thr221 and Thr226.

This sequence belongs to the metallo-beta-lactamase superfamily. RNA-metabolizing metallo-beta-lactamase-like family. CPSF2/YSH1 subfamily. In terms of assembly, component of the cleavage and polyadenylation specificity factor (CPSF) complex, composed of at least Clp, Cpsf73, Cpsf100 and Cpsf160. Interacts with Sym and Cpsf73 forming a core cleavage factor required for both polyadenylated and histone mRNA processing. Interacts with Slbp and Lsm11.

Its subcellular location is the nucleus. Functionally, component of the cleavage and polyadenylation specificity factor (CPSF) complex that plays a key role in pre-mRNA 3'-end formation, recognizing the AAUAAA signal sequence and interacting with poly(A) polymerase and other factors to bring about cleavage and poly(A) addition. Required for the cotranscriptional processing of 3'-ends of polyadenylated and histone pre-mRNA. In Drosophila melanogaster (Fruit fly), this protein is Probable cleavage and polyadenylation specificity factor subunit 2 (Cpsf100).